The primary structure comprises 357 residues: Putative diaminopimelate epimerase, chloroplastic (357 aa).

A chloroplast-targeting transit peptide spans 1 to 47 (MSSATAAATATIAAAAAAAAKLAATPAPAPSRRRLTLRGNPTARRCV). Residues Cys-145 and Cys-300 contribute to the active site.

Belongs to the diaminopimelate epimerase family.

It is found in the plastid. Its subcellular location is the chloroplast. It catalyses the reaction (2S,6S)-2,6-diaminopimelate = meso-2,6-diaminopimelate. It participates in amino-acid biosynthesis; L-lysine biosynthesis via DAP pathway; DL-2,6-diaminopimelate from LL-2,6-diaminopimelate: step 1/1. This Oryza sativa subsp. indica (Rice) protein is Putative diaminopimelate epimerase, chloroplastic (DAPF).